The primary structure comprises 292 residues: Acetylglutamate kinase (292 aa).

Residues 64-65, Arg86, and Asn190 contribute to the substrate site; that span reads GG.

This sequence belongs to the acetylglutamate kinase family. ArgB subfamily.

It is found in the cytoplasm. It carries out the reaction N-acetyl-L-glutamate + ATP = N-acetyl-L-glutamyl 5-phosphate + ADP. The protein operates within amino-acid biosynthesis; L-arginine biosynthesis; N(2)-acetyl-L-ornithine from L-glutamate: step 2/4. Its function is as follows. Catalyzes the ATP-dependent phosphorylation of N-acetyl-L-glutamate. In Pelobacter propionicus (strain DSM 2379 / NBRC 103807 / OttBd1), this protein is Acetylglutamate kinase.